Here is a 427-residue protein sequence, read N- to C-terminus: O-methyltransferase sol2 (427 aa).

Residue Asp-281 participates in S-adenosyl-L-methionine binding. His-327 (proton acceptor) is an active-site residue.

The protein belongs to the class I-like SAM-binding methyltransferase superfamily. Cation-independent O-methyltransferase family. COMT subfamily.

The protein operates within phytotoxin biosynthesis. In terms of biological role, O-methyltransferase; part of the gene cluster that mediates the biosynthesis of the phytotoxin solanapyrone, a causal agent of early blight disease of potato and tomato. The prosolanapyrone synthase sol1 is a polyketide synthase that produces the octaketide desmethylprosolanapyrone I via sequential condensations of 7 malonyl-CoA units with one acetyl-CoA unit, and one methylation step. The octaketide backbone is further methylated by the sol2 O-methyltransferase to yield prosolanapyrone I. Prosolanapyrone I is hydroxylated to prosolanapyrone II by the cytochrome P450 monooxygenase sol6. The solanapyrone synthase sol5 then catalyzes the oxidation of prosolanapyrone II and the subsequent Diels Alder cycloisomerization of the product prosolanapyrone III to solanapyrones A and D. Solanapyrones A and D are then converted into solanapyrones B and E, respectively, by the sol3 dehydrogenase. The sequence is that of O-methyltransferase sol2 (sol2) from Alternaria solani.